Here is a 179-residue protein sequence, read N- to C-terminus: Adenine phosphoribosyltransferase (179 aa).

This sequence belongs to the purine/pyrimidine phosphoribosyltransferase family. Homodimer.

Its subcellular location is the cytoplasm. It catalyses the reaction AMP + diphosphate = 5-phospho-alpha-D-ribose 1-diphosphate + adenine. It functions in the pathway purine metabolism; AMP biosynthesis via salvage pathway; AMP from adenine: step 1/1. Its function is as follows. Catalyzes a salvage reaction resulting in the formation of AMP, that is energically less costly than de novo synthesis. The chain is Adenine phosphoribosyltransferase from Actinobacillus pleuropneumoniae serotype 5b (strain L20).